The chain runs to 156 residues: MPRKGPAPKRPLVVDPVYQSPLVTQLVNKILLDGKKSVAESIVYGALEGARDKTGGDPVVVLKRALDNVKPAIEVKSRRVGGSTYQVPIEVRPTRSTTLALRWLVGYARQRREKTMTERLLNEILDASNGLGAAVKRREDTHKMAESNRAFAHYRW.

It belongs to the universal ribosomal protein uS7 family. In terms of assembly, part of the 30S ribosomal subunit. Contacts proteins S9 and S11.

In terms of biological role, one of the primary rRNA binding proteins, it binds directly to 16S rRNA where it nucleates assembly of the head domain of the 30S subunit. Is located at the subunit interface close to the decoding center, probably blocks exit of the E-site tRNA. The polypeptide is Small ribosomal subunit protein uS7 (Kineococcus radiotolerans (strain ATCC BAA-149 / DSM 14245 / SRS30216)).